We begin with the raw amino-acid sequence, 661 residues long: Protein WHI3 (661 aa).

A compositionally biased stretch (low complexity) spans 14–31; that stretch reads ASSSDNVVSSTTNTHNIS. A disordered region spans residues 14–58; sequence ASSSDNVVSSTTNTHNISPSHRSSLNLNTTSHPHEASGRGSASGE. Positions 32 to 44 are enriched in polar residues; it reads PSHRSSLNLNTTS. At Ser231 the chain carries Phosphoserine. Composition is skewed to low complexity over residues 237-272, 383-409, and 496-508; these read DPFS…SPQQ, NTSA…SASS, and KNNS…SNIT. Disordered regions lie at residues 237–280, 383–410, 469–508, and 613–661; these read DPFS…QVNS, NTSA…ASSQ, EHMY…SNIT, and SSKG…HIKN. Residues 538–625 form the RRM domain; sequence NTLYVGNLPS…GGIRLSFSKN (88 aa). A compositionally biased stretch (low complexity) spans 628-647; it reads GVRGPNSRRGGSGNPNPNVN. The segment covering 648–661 has biased composition (polar residues); that stretch reads MLSSYNSNVGHIKN.

Its function is as follows. Involved in size control and cell cycle. The polypeptide is Protein WHI3 (WHI3) (Saccharomyces cerevisiae (strain ATCC 204508 / S288c) (Baker's yeast)).